The primary structure comprises 689 residues: tRNA 5-methylaminomethyl-2-thiouridine biosynthesis bifunctional protein MnmC (689 aa).

The interval 1-245 is tRNA (mnm(5)s(2)U34)-methyltransferase; sequence MNQRPIQTAT…KREMLTGTLP (245 aa). The FAD-dependent cmnm(5)s(2)U34 oxidoreductase stretch occupies residues 270 to 689; the sequence is IGGGIVSALT…RSPATQESSR (420 aa).

The protein in the N-terminal section; belongs to the methyltransferase superfamily. tRNA (mnm(5)s(2)U34)-methyltransferase family. This sequence in the C-terminal section; belongs to the DAO family. It depends on FAD as a cofactor.

The protein localises to the cytoplasm. The catalysed reaction is 5-aminomethyl-2-thiouridine(34) in tRNA + S-adenosyl-L-methionine = 5-methylaminomethyl-2-thiouridine(34) in tRNA + S-adenosyl-L-homocysteine + H(+). Catalyzes the last two steps in the biosynthesis of 5-methylaminomethyl-2-thiouridine (mnm(5)s(2)U) at the wobble position (U34) in tRNA. Catalyzes the FAD-dependent demodification of cmnm(5)s(2)U34 to nm(5)s(2)U34, followed by the transfer of a methyl group from S-adenosyl-L-methionine to nm(5)s(2)U34, to form mnm(5)s(2)U34. The protein is tRNA 5-methylaminomethyl-2-thiouridine biosynthesis bifunctional protein MnmC of Yersinia pseudotuberculosis serotype I (strain IP32953).